Consider the following 118-residue polypeptide: Class I hydrophobin hum2 (118 aa).

An N-terminal signal peptide occupies residues 1-19 (MQFKTIFATLAAFAAVASA). 4 disulfide bridges follow: Cys33–Cys98, Cys40–Cys92, Cys41–Cys74, and Cys99–Cys112.

Belongs to the fungal hydrophobin family. Self-assembles to form functional amyloid fibrils called rodlets. Self-assembly into fibrillar rodlets occurs spontaneously at hydrophobic:hydrophilic interfaces and the rodlets further associate laterally to form amphipathic monolayers.

It localises to the secreted. The protein resides in the cell wall. Its function is as follows. Aerial growth, conidiation, and dispersal of filamentous fungi in the environment rely upon a capability of their secreting small amphipathic proteins called hydrophobins (HPBs) with low sequence identity. Class I can self-assemble into an outermost layer of rodlet bundles on aerial cell surfaces, conferring cellular hydrophobicity that supports fungal growth, development and dispersal; whereas Class II form highly ordered films at water-air interfaces through intermolecular interactions but contribute nothing to the rodlet structure. Hum2 is a class I hydrophobin which that plays a role in, but seems not to be crucial for the formation of aerial hyphae. Hydrophobins of Mycosarcoma maydis have been functionally replaced, at least partially, by repellents. This is Class I hydrophobin hum2 from Mycosarcoma maydis (Corn smut fungus).